Here is a 58-residue protein sequence, read N- to C-terminus: Small ribosomal subunit protein bS21 (58 aa).

Belongs to the bacterial ribosomal protein bS21 family.

The protein is Small ribosomal subunit protein bS21 of Streptococcus pyogenes serotype M49 (strain NZ131).